Reading from the N-terminus, the 1244-residue chain is Membrane-associated phosphatidylinositol transfer protein 1 (1244 aa).

Phosphothreonine is present on Thr-59. Disordered stretches follow at residues 258–331 and 339–358; these read KCNT…QSLS and ARDS…EGFS. Residue Thr-287 is modified to Phosphothreonine; by CDK1. Low complexity predominate over residues 299 to 319; that stretch reads ASPDASFGKQWSSSSRSSYSS. Phosphoserine is present on residues Ser-300, Ser-304, Ser-319, Ser-326, Ser-329, Ser-342, Ser-345, Ser-346, and Ser-373. Ser-382 carries the phosphoserine; by CDK1 modification. The interval 581 to 682 is disordered; it reads AGTGSRGSSR…SSEAPDGPSS (102 aa). Phosphoserine occurs at positions 593, 600, and 621. Positions 643–658 are enriched in polar residues; sequence GSQNSLQAAPATTSSW. Residues 686-880 enclose the DDHD domain; the sequence is LDFKVSGFFL…VAFILRQVIE (195 aa). Ser-896 carries the post-translational modification Phosphoserine. The interval 1206–1244 is disordered; that stretch reads QLLRSRGPSQAEREGPGTPPTTLARGKARSISLKLDSEE. Arg-1211 and Arg-1218 each carry omega-N-methylarginine. Ser-1237 carries the phosphoserine modification.

It belongs to the PtdIns transfer protein family. PI transfer class IIA subfamily. Interacts with PIK4CA. Interacts with PTK2B via its C-terminus. Interacts with RHOA. Has higher affinity for the inactive, GDP-bound form of RHOA. The CDK1-phosphorylated form interacts with PLK1. Interacts with VAPB. Post-translationally, phosphorylated on multiple sites by CDK1 at the onset of mitosis. Phosphorylation facilitates dissociation from the Golgi complex and is required for interaction with PLK1. Phosphorylated on threonine residues upon treatment with oleic acid. In terms of processing, phosphorylated on tyrosine residues by PTK2B. Ubiquitous.

It is found in the cytoplasm. The protein resides in the golgi apparatus. It localises to the golgi stack membrane. Its subcellular location is the endoplasmic reticulum membrane. The protein localises to the lipid droplet. It is found in the cleavage furrow. The protein resides in the midbody. It catalyses the reaction a 1,2-diacyl-sn-glycero-3-phospho-(1D-myo-inositol)(in) = a 1,2-diacyl-sn-glycero-3-phospho-(1D-myo-inositol)(out). In terms of biological role, catalyzes the transfer of phosphatidylinositol (PI) between membranes. Binds PI, phosphatidylcholine (PC) and phosphatidic acid (PA) with the binding affinity order of PI &gt; PA &gt; PC. Regulates RHOA activity, and plays a role in cytoskeleton remodeling. Necessary for normal completion of cytokinesis. Plays a role in maintaining normal diacylglycerol levels in the Golgi apparatus. Necessary for maintaining the normal structure of the endoplasmic reticulum and the Golgi apparatus. Required for protein export from the endoplasmic reticulum and the Golgi. Binds calcium ions. The chain is Membrane-associated phosphatidylinositol transfer protein 1 (PITPNM1) from Homo sapiens (Human).